A 436-amino-acid polypeptide reads, in one-letter code: APO protein 1, chloroplastic (436 aa).

The N-terminal 47 residues, 1–47 (MLLVSPACRGVYLQTIDPKPIDFSARASYALCFQIPTSIPKRECLMR), are a transit peptide targeting the chloroplast. 2 APO domains span residues 155–240 (ACSE…EIPE) and 329–414 (ACGY…RVPQ).

This sequence belongs to the APO family. As to expression, expressed at low level. Expressed at higher level in leaves. Expressed at lower level in roots, stems, siliques and flowers.

Its subcellular location is the plastid. The protein resides in the chloroplast. Functionally, involved in the stable assembly of several 4Fe-4S cluster-containing complexes of chloroplasts. May participate in 4Fe-4S cofactor incorporation into psaA and/or psaB during translation. The protein is APO protein 1, chloroplastic (APO1) of Arabidopsis thaliana (Mouse-ear cress).